The chain runs to 166 residues: uncharacterized protein (166 aa).

The next 3 membrane-spanning stretches (helical) occupy residues 4 to 24 (LNIF…EASI), 101 to 121 (LITC…SEAI), and 146 to 166 (SWSS…QCFL).

Its subcellular location is the membrane. This is an uncharacterized protein from Saccharomyces cerevisiae (strain ATCC 204508 / S288c) (Baker's yeast).